A 315-amino-acid polypeptide reads, in one-letter code: MMWENWTIVSEFVLVSFSALSTELQALLFLLFLTIYLVTLMGNVLIILVTIADSALQSPMYFFLRNLSFLEIGFNLVIVPKMLGTLIIQDTTISFLGCATQMYFFFFFGAAECCLLATMAYDRYVAICDPLHYPVIMGHISCAQLAAASWFSGFSVATVQTTWIFSFPFCGPNRVNHFFCDSPPVIALVCADTSVFELEALTATVLFILFPFLLILGSYVRILSTIFRMPSAEGKHQAFSTCSAHLLVVSLFYSTAILTYFRPQSSASSESKKLLSLSSTVVTPMLNPIIYSSRNKEVKAALKRLIHRTLGSQKL.

The Extracellular segment spans residues methionine 1–alanine 26. An N-linked (GlcNAc...) asparagine glycan is attached at asparagine 5. The helical transmembrane segment at leucine 27–isoleucine 47 threads the bilayer. Over leucine 48 to alanine 55 the chain is Cytoplasmic. Residues leucine 56–leucine 76 form a helical membrane-spanning segment. Residues valine 77–threonine 100 are Extracellular-facing. Cysteine 98 and cysteine 190 are oxidised to a cystine. The chain crosses the membrane as a helical span at residues glutamine 101–tyrosine 121. The Cytoplasmic portion of the chain corresponds to aspartate 122–isoleucine 140. A helical transmembrane segment spans residues serine 141–threonine 161. The Extracellular segment spans residues threonine 162–leucine 198. Residues glutamate 199 to serine 218 form a helical membrane-spanning segment. Topologically, residues tyrosine 219–alanine 238 are cytoplasmic. A helical membrane pass occupies residues phenylalanine 239–threonine 259. At tyrosine 260–lysine 272 the chain is on the extracellular side. Residues lysine 273–serine 293 traverse the membrane as a helical segment. Residues arginine 294–leucine 315 are Cytoplasmic-facing.

This sequence belongs to the G-protein coupled receptor 1 family. As to expression, expressed in the tongue.

The protein resides in the cell membrane. Odorant receptor (Potential). May be involved in taste perception. This Homo sapiens (Human) protein is Olfactory receptor 10A4 (OR10A4).